The primary structure comprises 172 residues: uncharacterized protein (172 aa).

2 disordered regions span residues 1 to 54 and 82 to 111; these read MPRR…GGSS and ITGG…SVPE. Over residues 14–29 the composition is skewed to low complexity; sequence AAPARSASTAAALPPR. Residues 30 to 47 show a composition bias toward pro residues; that stretch reads TMAPPPAPSRVQQAPPPT. Residues 89–109 show a composition bias toward polar residues; sequence SGSNNAPADTSVPQSSYSNSV.

This is an uncharacterized protein from Schizosaccharomyces pombe (strain 972 / ATCC 24843) (Fission yeast).